Reading from the N-terminus, the 623-residue chain is Arginine decarboxylase 2 (623 aa).

At lysine 109 the chain carries N6-(pyridoxal phosphate)lysine. Residue 295–305 (LDCGGGLGVDY) participates in substrate binding.

The protein belongs to the Orn/Lys/Arg decarboxylase class-II family. SpeA subfamily. It depends on pyridoxal 5'-phosphate as a cofactor. Requires Mg(2+) as cofactor. Expressed in stems (at protein level).

It catalyses the reaction L-arginine + H(+) = agmatine + CO2. Its pathway is amine and polyamine biosynthesis; agmatine biosynthesis; agmatine from L-arginine: step 1/1. The sequence is that of Arginine decarboxylase 2 (ADC2) from Oryza sativa subsp. japonica (Rice).